Consider the following 830-residue polypeptide: Adhesion G protein-coupled receptor E2 (830 aa).

The N-terminal stretch at 1-22 (MRHGHPRLLPGLLMLLLLPLGA) is a signal peptide. The Extracellular segment spans residues 23–540 (AAQKTSGCAR…MAHYDVQEED (518 aa)). The EGF-like 1 domain maps to 26-68 (KTSGCARWCPPKSTCVNATTCRCSPGFSSLSGEIFSSPLESCD). 5 cysteine pairs are disulfide-bonded: cysteine 30–cysteine 40, cysteine 34–cysteine 46, cysteine 48–cysteine 67, cysteine 73–cysteine 87, and cysteine 81–cysteine 96. An N-linked (GlcNAc...) asparagine glycan is attached at asparagine 42. The EGF-like 1; calcium-binding domain maps to 69-108 (DIDECGPPPLVSCGRLADCQNTEGSYHCMCSPGYALASGA). Asparagine 113 is a glycosylation site (N-linked (GlcNAc...) asparagine). The region spanning 121–159 (DVDECQLKPRVCKSRGICTNTKGSYTCKCPPGFELNLGD) is the EGF-like 2; calcium-binding domain. Intrachain disulfides connect cysteine 125–cysteine 138, cysteine 132–cysteine 147, cysteine 169–cysteine 182, cysteine 176–cysteine 191, cysteine 218–cysteine 231, and cysteine 225–cysteine 240. The region spanning 165–203 (DVNECTSGQNPCHNSTHCLNNIGGYECRCRPGWKPVPGS) is the EGF-like 3; calcium-binding domain. N-linked (GlcNAc...) asparagine glycosylation is present at asparagine 178. The 40-residue stretch at 214-253 (DVDECSSGKHTCHYSTVCINTVGSYKCRCRRGWKPKPRFQ) folds into the EGF-like 4; calcium-binding domain. Asparagine 258, asparagine 348, asparagine 361, and asparagine 379 each carry an N-linked (GlcNAc...) asparagine glycan. The 180-residue stretch at 358-537 (WTFNASAGTD…AVLMAHYDVQ (180 aa)) folds into the GAIN-B domain. 2 cysteine pairs are disulfide-bonded: cysteine 489–cysteine 519 and cysteine 507–cysteine 521. A GPS region spans residues 489–537 (CVFWEHSQDECGHWSTRGCTVVDSGDTSTTCQCTHLSSFAVLMAHYDVQ). The chain crosses the membrane as a helical span at residues 541 to 561 (LVLPVITYVGLGLSLLCLLLA). At 562-576 (ALTFLLCKAIQNTST) the chain is on the cytoplasmic side. Residues 577 to 597 (SLHLQLLICLFLAHLLFLMAI) traverse the membrane as a helical segment. The Extracellular segment spans residues 598 to 603 (DRTEIK). A helical transmembrane segment spans residues 604-624 (VLCSIIAGALHYLYLASFTWM). Topologically, residues 625–651 (LLEGLHLFLTARNLMVVNYSSVSMLMK) are cytoplasmic. The helical transmembrane segment at 652–672 (KLMYPVGYGVPTLIVAISAAS) threads the bilayer. Residues 673-690 (RSHLYGTRTRCWLNPEER) are Extracellular-facing. Residues 691–711 (FIWSFLGPVCTIFSVNLGFFL) traverse the membrane as a helical segment. Over 712 to 744 (MTLWILKSKLSSLNSDVSTLQNTRMLTFKAIAQ) the chain is Cytoplasmic. A helical transmembrane segment spans residues 745-765 (LFILGCTWCLGILQVGPAAHV). The Extracellular portion of the chain corresponds to 766–767 (MA). A helical membrane pass occupies residues 768–788 (YLFTIINSLQGVFIFLVYCLL). The Cytoplasmic segment spans residues 789 to 830 (SQQVREEYGKWFKGIRKTRAESEKYTLSSRAMSDVNKPMMVN).

This sequence belongs to the G-protein coupled receptor 2 family. Adhesion G-protein coupled receptor (ADGR) subfamily. In terms of assembly, forms a heterodimer, consisting of a large extracellular region non-covalently linked to a seven-transmembrane moiety. Interacts with chondroitin sulfate; the interaction with chondroitin sulfate is calcium-dependent. Interacts with CD55. Post-translationally, autoproteolytically cleaved into 2 subunits, an extracellular alpha subunit and a seven-transmembrane beta subunit.

The protein localises to the cell membrane. The protein resides in the cell projection. It localises to the ruffle membrane. In terms of biological role, cell surface receptor that binds to the chondroitin sulfate moiety of glycosaminoglycan chains and promotes cell attachment. Promotes granulocyte chemotaxis, degranulation and adhesion. In macrophages, promotes the release of inflammatory cytokines, including IL8 and TNF. Signals probably through G-proteins. This is Adhesion G protein-coupled receptor E2 (ADGRE2) from Canis lupus familiaris (Dog).